The primary structure comprises 130 residues: Cyclin-dependent kinase 4 inhibitor B (130 aa).

ANK repeat units lie at residues 5 to 34, 38 to 66, 71 to 100, and 104 to 130; these read GSDA…DPNA, FGRR…EPNC, TLTR…RLDV, and WGRL…ATGD. T12 is subject to Phosphothreonine.

It belongs to the CDKN2 cyclin-dependent kinase inhibitor family. In terms of assembly, heterodimer of CDKN2B with CDK4 or CDK6. As to expression, expression abundant in lung, less abundant in testis, barely detectable in liver, and not detectable in neonatal kidney, adult kidney, brain, heart, or spleen.

Its function is as follows. Interacts strongly with CDK4 and CDK6. Potent inhibitor. Potential effector of TGF-beta induced cell cycle arrest. This is Cyclin-dependent kinase 4 inhibitor B (Cdkn2b) from Rattus norvegicus (Rat).